Consider the following 1004-residue polypeptide: 2-oxoglutarate dehydrogenase E1 component (1004 aa).

Belongs to the alpha-ketoglutarate dehydrogenase family. As to quaternary structure, homodimer. Part of the 2-oxoglutarate dehydrogenase (OGDH) complex composed of E1 (2-oxoglutarate dehydrogenase), E2 (dihydrolipoamide succinyltransferase) and E3 (dihydrolipoamide dehydrogenase); the complex contains multiple copies of the three enzymatic components (E1, E2 and E3). Thiamine diphosphate is required as a cofactor.

The enzyme catalyses N(6)-[(R)-lipoyl]-L-lysyl-[protein] + 2-oxoglutarate + H(+) = N(6)-[(R)-S(8)-succinyldihydrolipoyl]-L-lysyl-[protein] + CO2. In terms of biological role, E1 component of the 2-oxoglutarate dehydrogenase (OGDH) complex which catalyzes the decarboxylation of 2-oxoglutarate, the first step in the conversion of 2-oxoglutarate to succinyl-CoA and CO(2). This chain is 2-oxoglutarate dehydrogenase E1 component, found in Brucella suis biovar 1 (strain 1330).